The chain runs to 485 residues: Pumilio domain-containing protein 7 (485 aa).

Residues 29–72 are disordered; it reads NKTHKNKNPKPPVKLLPYRHGSNTTSSDSDSYIFNSGSGSSDAE. The segment covering 49–71 has biased composition (polar residues); that stretch reads GSNTTSSDSDSYIFNSGSGSSDA. Pumilio repeat units lie at residues 86–124, 128–163, 164–200, 201–236, 237–279, 287–324, 326–361, and 370–411; these read DVLL…AVFE, ESTT…ELLR, QMID…QLIQ, ELST…TFFV, HFLS…FRIQ, CIVR…TIID, CLLR…EMME, and DVES…RELP. The RNA-binding stretch occupies residues 439-454; it reads FSSGKKIIDSVMRHGV.

Its function is as follows. RNA-binding protein that binds to the consensus sequence 5'-CUCUGUAUCUUGU-3' in mRNA 3'-UTRs and modulates mRNA expression and stability. Functions redundantly with puf-5 and puf-6 in oocyte formation and organization, early embryonic cell divisions, and repression of expression of glp-1 and other maternal mRNAs in late oogenesis. The protein is Pumilio domain-containing protein 7 of Caenorhabditis elegans.